A 413-amino-acid polypeptide reads, in one-letter code: Protein CDKN2AIP homolog B (413 aa).

The region spanning 21–118 (LERVRGQCES…TTRDELVAKV (98 aa)) is the XRN2-binding (XTBD) domain. The disordered stretch occupies residues 118 to 266 (VKKRGNSSSN…PTRRFTTEHT (149 aa)). Basic and acidic residues predominate over residues 183 to 193 (NKREAHSRTDV).

This sequence belongs to the CARF family.

It is found in the nucleus. Its subcellular location is the nucleoplasm. Its function is as follows. May regulate DNA damage response and cell proliferation. The sequence is that of Protein CDKN2AIP homolog B (cdkn2aip-b) from Xenopus laevis (African clawed frog).